Consider the following 295-residue polypeptide: Small ribosomal subunit protein uS2 (295 aa).

Residues 264–295 (KFSKTKNIDEETNTEFEQALNDTDENKNADNA) are disordered.

This sequence belongs to the universal ribosomal protein uS2 family.

The polypeptide is Small ribosomal subunit protein uS2 (Rickettsia akari (strain Hartford)).